Consider the following 323-residue polypeptide: tRNA dimethylallyltransferase (323 aa).

An ATP-binding site is contributed by 12–19 (GPTAAGKT). 14–19 (TAAGKT) contributes to the substrate binding site. 2 interaction with substrate tRNA regions span residues 37–40 (DSAL) and 161–165 (QRLIR).

It belongs to the IPP transferase family. As to quaternary structure, monomer. Mg(2+) is required as a cofactor.

It carries out the reaction adenosine(37) in tRNA + dimethylallyl diphosphate = N(6)-dimethylallyladenosine(37) in tRNA + diphosphate. In terms of biological role, catalyzes the transfer of a dimethylallyl group onto the adenine at position 37 in tRNAs that read codons beginning with uridine, leading to the formation of N6-(dimethylallyl)adenosine (i(6)A). This Pseudomonas putida (strain ATCC 700007 / DSM 6899 / JCM 31910 / BCRC 17059 / LMG 24140 / F1) protein is tRNA dimethylallyltransferase.